Here is a 566-residue protein sequence, read N- to C-terminus: Intracellular exo-alpha-(1-&gt;5)-L-arabinofuranosidase (566 aa).

Residues 1-12 (MTTHNSQYSAET) show a composition bias toward polar residues. Positions 1–39 (MTTHNSQYSAETTHPDKQESSPAPTAAGTTASNVSTTGN) are disordered. Residues 20–32 (SSPAPTAAGTTAS) show a composition bias toward low complexity. Alpha-L-arabinofuranose-binding residues include E69, N114, and N214. The active-site Proton donor/acceptor is the E215. Residues Y286, E340, and Q409 each contribute to the alpha-L-arabinofuranose site. E340 acts as the Nucleophile in catalysis.

The protein belongs to the glycosyl hydrolase 51 family. Homohexamer; trimer of dimers.

It localises to the cytoplasm. It carries out the reaction Hydrolysis of terminal non-reducing alpha-L-arabinofuranoside residues in alpha-L-arabinosides.. It participates in glycan metabolism; L-arabinan degradation. With respect to regulation, completely inhibited by Hg(2+) and Cu(2+) ions, whereas 1 mM Zn(2+) inhibited activity by 51%. In terms of biological role, involved in the degradation of arabinan and is a key enzyme in the complete degradation of the plant cell wall. Catalyzes the cleavage of terminal alpha-(1-&gt;5)-arabinofuranosyl bonds in different hemicellulosic homopolysaccharides (branched and debranched arabinans). It is active with sugar beet arabinan and wheat arabinoxylan. It also exhibited activity against alpha-(1-&gt;5)-linked arabinobiose, arabinotriose, arabinotetraose, and arabinopentaose. This Bifidobacterium longum protein is Intracellular exo-alpha-(1-&gt;5)-L-arabinofuranosidase (abfB).